Consider the following 122-residue polypeptide: UPF0102 protein NGR_c36770 (122 aa).

The protein belongs to the UPF0102 family.

The polypeptide is UPF0102 protein NGR_c36770 (Sinorhizobium fredii (strain NBRC 101917 / NGR234)).